A 77-amino-acid polypeptide reads, in one-letter code: Major outer membrane lipoprotein Lpp (77 aa).

The first 19 residues, 1 to 19, serve as a signal peptide directing secretion; that stretch reads MNRTKLVLGAVILGSHSAG. A lipid anchor (N-palmitoyl cysteine) is attached at Cys-20. A lipid anchor (S-diacylglycerol cysteine) is attached at Cys-20. 2 consecutive repeats follow at residues 23–33 and 37–47; these read NAKIDQLSSDV and NAKVDQLSNDV. The stretch at 26 to 74 forms a coiled coil; sequence IDQLSSDVQTLNAKVDQLSNDVNAMRSDVQAAKDDAARANQRLDNQAHA. The interval 56-77 is disordered; sequence AAKDDAARANQRLDNQAHAYKK. N6-murein peptidoglycan lysine is present on Lys-77.

This sequence belongs to the Lpp family. As to quaternary structure, homotrimer.

Its subcellular location is the cell outer membrane. It is found in the secreted. The protein localises to the cell wall. Its function is as follows. A highly abundant outer membrane lipoprotein that controls the distance between the inner and outer membranes. The only protein known to be covalently linked to the peptidoglycan network (PGN). Also non-covalently binds the PGN. The link between the cell outer membrane and PGN contributes to maintenance of the structural and functional integrity of the cell envelope, and maintains the correct distance between the PGN and the outer membrane. This Serratia marcescens protein is Major outer membrane lipoprotein Lpp.